The following is a 320-amino-acid chain: Homeobox-leucine zipper protein HOX25 (320 aa).

The homeobox DNA-binding region spans 79 to 139; sequence AAARKRRLTA…NRRARWKTKQ (61 aa). The interval 138 to 182 is leucine-zipper; that stretch reads KQLELDFDRLRAAHDELLAGRTALAADNESLRSQVILLTEKLQAN. Disordered stretches follow at residues 181–209 and 249–282; these read ANGK…KSFQ and DSPE…PSSS. A compositionally biased stretch (acidic residues) spans 265–278; the sequence is SEDDCGGAGSDDDY.

Belongs to the HD-ZIP homeobox family. Class I subfamily. Expressed in roots, leaf sheaths and blades and panicles.

It localises to the nucleus. Probable transcription factor. The polypeptide is Homeobox-leucine zipper protein HOX25 (HOX25) (Oryza sativa subsp. japonica (Rice)).